Here is a 215-residue protein sequence, read N- to C-terminus: Guanylate kinase (215 aa).

The region spanning 9–187 is the Guanylate kinase-like domain; sequence GTLYIVSAPS…ALDELSCLVH (179 aa). 16–23 lines the ATP pocket; sequence APSGAGKT.

The protein belongs to the guanylate kinase family.

The protein resides in the cytoplasm. The enzyme catalyses GMP + ATP = GDP + ADP. Essential for recycling GMP and indirectly, cGMP. In Chromohalobacter salexigens (strain ATCC BAA-138 / DSM 3043 / CIP 106854 / NCIMB 13768 / 1H11), this protein is Guanylate kinase.